A 345-amino-acid polypeptide reads, in one-letter code: UDP-3-O-acylglucosamine N-acyltransferase 3 (345 aa).

Histidine 236 (proton acceptor) is an active-site residue.

It belongs to the transferase hexapeptide repeat family. LpxD subfamily. As to quaternary structure, homotrimer.

The catalysed reaction is a UDP-3-O-[(3R)-3-hydroxyacyl]-alpha-D-glucosamine + a (3R)-hydroxyacyl-[ACP] = a UDP-2-N,3-O-bis[(3R)-3-hydroxyacyl]-alpha-D-glucosamine + holo-[ACP] + H(+). It functions in the pathway bacterial outer membrane biogenesis; LPS lipid A biosynthesis. Its function is as follows. Catalyzes the N-acylation of UDP-3-O-acylglucosamine using 3-hydroxyacyl-ACP as the acyl donor. Is involved in the biosynthesis of lipid A, a phosphorylated glycolipid that anchors the lipopolysaccharide to the outer membrane of the cell. The chain is UDP-3-O-acylglucosamine N-acyltransferase 3 from Gloeobacter violaceus (strain ATCC 29082 / PCC 7421).